Consider the following 389-residue polypeptide: Methane monooxygenase component A beta chain (389 aa).

As to quaternary structure, m.capsulatus has two forms of methane monooxygenase, a soluble and a membrane-bound type. The soluble type consists of four components (A to D): protein A, comprising three chains, in an alpha-2, beta-2, gamma-2 configuration, is a nonheme iron protein containing an unusual mu-hydroxo bridge structure at its active site and interacts with both oxygen and methane.

It carries out the reaction methane + NADH + O2 + H(+) = methanol + NAD(+) + H2O. The catalysed reaction is methane + NADPH + O2 + H(+) = methanol + NADP(+) + H2O. Responsible for the initial oxygenation of methane to methanol in methanotrophs. It also catalyzes the monohydroxylation of a variety of unactivated alkenes, alicyclic, aromatic and heterocyclic compounds. In Methylococcus capsulatus (strain ATCC 33009 / NCIMB 11132 / Bath), this protein is Methane monooxygenase component A beta chain (mmoY).